The chain runs to 88 residues: Small ribosomal subunit protein bS16c (88 aa).

Belongs to the bacterial ribosomal protein bS16 family.

It is found in the plastid. The protein resides in the chloroplast. This Gossypium barbadense (Sea Island cotton) protein is Small ribosomal subunit protein bS16c.